The sequence spans 220 residues: Transcriptional regulatory protein LnrK (220 aa).

One can recognise a Response regulatory domain in the interval 3–119; the sequence is KIIITDDQDI…TIVKAVMTVH (117 aa). Aspartate 54 is modified (4-aspartylphosphate). Residues 151–216 form the HTH luxR-type domain; it reads KPNELLDLTE…QAAIYSVRYG (66 aa). The H-T-H motif DNA-binding region spans 175-194; sequence NKEIAEKLYITEGTVKNHVS.

Post-translationally, phosphorylated by LnrJ.

The protein localises to the cytoplasm. In terms of biological role, required for resistance to linearmycins, a family of antibiotic-specialized metabolites produced by some streptomycetes. Member of the two-component regulatory system LnrJ/LnrK, which induces expression of the LnrLMN ABC transporter in response to linearmycins and other polyenes. Probably binds to the promoter region of the lnrLMN operon and directly regulates its expression. May also promote biofilm formation. The chain is Transcriptional regulatory protein LnrK from Bacillus subtilis (strain 168).